The following is a 188-amino-acid chain: Xanthine phosphoribosyltransferase (188 aa).

Xanthine is bound by residues L20 and N27. A127–A131 contacts 5-phospho-alpha-D-ribose 1-diphosphate. K155 provides a ligand contact to xanthine.

It belongs to the purine/pyrimidine phosphoribosyltransferase family. Xpt subfamily. In terms of assembly, homodimer.

Its subcellular location is the cytoplasm. The enzyme catalyses XMP + diphosphate = xanthine + 5-phospho-alpha-D-ribose 1-diphosphate. Its pathway is purine metabolism; XMP biosynthesis via salvage pathway; XMP from xanthine: step 1/1. Converts the preformed base xanthine, a product of nucleic acid breakdown, to xanthosine 5'-monophosphate (XMP), so it can be reused for RNA or DNA synthesis. The chain is Xanthine phosphoribosyltransferase from Phocaeicola vulgatus (strain ATCC 8482 / DSM 1447 / JCM 5826 / CCUG 4940 / NBRC 14291 / NCTC 11154) (Bacteroides vulgatus).